Reading from the N-terminus, the 227-residue chain is Large ribosomal subunit protein uL3 (227 aa).

An N5-methylglutamine modification is found at glutamine 151.

This sequence belongs to the universal ribosomal protein uL3 family. As to quaternary structure, part of the 50S ribosomal subunit. Forms a cluster with proteins L14 and L19. In terms of processing, methylated by PrmB.

One of the primary rRNA binding proteins, it binds directly near the 3'-end of the 23S rRNA, where it nucleates assembly of the 50S subunit. This is Large ribosomal subunit protein uL3 from Gluconacetobacter diazotrophicus (strain ATCC 49037 / DSM 5601 / CCUG 37298 / CIP 103539 / LMG 7603 / PAl5).